The sequence spans 81 residues: Large ribosomal subunit protein bL31B (81 aa).

Belongs to the bacterial ribosomal protein bL31 family. Type B subfamily. As to quaternary structure, part of the 50S ribosomal subunit.

This is Large ribosomal subunit protein bL31B from Lactococcus lactis subsp. cremoris (strain MG1363).